The primary structure comprises 153 residues: MLAFNFFGATEGGLFDINATLPLMAIQVVALTYILNSLFFKPVGNVVEKREKFVSNNIIEAKNKLSEVKKLEADLLTQLQSARTEAQRIVSEAENESDKLYKEALELANNEANASKEKARLEIESQTSAARDQLSKQADDLSELIVNRLILEK.

Residues 23 to 40 (LMAIQVVALTYILNSLFF) form a helical membrane-spanning segment.

It belongs to the ATPase B chain family. F-type ATPases have 2 components, F(1) - the catalytic core - and F(0) - the membrane proton channel. F(1) has five subunits: alpha(3), beta(3), gamma(1), delta(1), epsilon(1). F(0) has four main subunits: a(1), b(1), b'(1) and c(10-14). The alpha and beta chains form an alternating ring which encloses part of the gamma chain. F(1) is attached to F(0) by a central stalk formed by the gamma and epsilon chains, while a peripheral stalk is formed by the delta, b and b' chains.

It is found in the cellular thylakoid membrane. Functionally, f(1)F(0) ATP synthase produces ATP from ADP in the presence of a proton or sodium gradient. F-type ATPases consist of two structural domains, F(1) containing the extramembraneous catalytic core and F(0) containing the membrane proton channel, linked together by a central stalk and a peripheral stalk. During catalysis, ATP synthesis in the catalytic domain of F(1) is coupled via a rotary mechanism of the central stalk subunits to proton translocation. In terms of biological role, component of the F(0) channel, it forms part of the peripheral stalk, linking F(1) to F(0). The b'-subunit is a diverged and duplicated form of b found in plants and photosynthetic bacteria. This Prochlorococcus marinus (strain AS9601) protein is ATP synthase subunit b'.